The primary structure comprises 179 residues: Large ribosomal subunit protein uL6 (179 aa).

This sequence belongs to the universal ribosomal protein uL6 family. In terms of assembly, part of the 50S ribosomal subunit.

Functionally, this protein binds to the 23S rRNA, and is important in its secondary structure. It is located near the subunit interface in the base of the L7/L12 stalk, and near the tRNA binding site of the peptidyltransferase center. This is Large ribosomal subunit protein uL6 from Solidesulfovibrio magneticus (strain ATCC 700980 / DSM 13731 / RS-1) (Desulfovibrio magneticus).